Consider the following 567-residue polypeptide: Diacylglycerol kinase epsilon (567 aa).

A helical transmembrane segment spans residues 22–42; sequence LILWTLCSVLLPVFITFWCSL. Phorbol-ester/DAG-type zinc fingers lie at residues 59 to 108 and 124 to 177; these read KHGW…RFQC and PHHW…NEKC. In terms of domain architecture, DAGKc spans 215-356; the sequence is KQWTPLIILA…LDRWKVQVTN (142 aa).

Belongs to the eukaryotic diacylglycerol kinase family. Expressed predominantly in testis. Expressed in endothelium, platelets and podocytes (at protein level).

Its subcellular location is the membrane. It localises to the cytoplasm. It catalyses the reaction a 1,2-diacyl-sn-glycerol + ATP = a 1,2-diacyl-sn-glycero-3-phosphate + ADP + H(+). The enzyme catalyses 1-hexadecanoyl-2-(5Z,8Z,11Z,14Z-eicosatetraenoyl)-sn-glycerol + ATP = 1-hexadecanoyl-2-(5Z,8Z,11Z,14Z-eicosatetraenoyl)-sn-glycero-3-phosphate + ADP + H(+). The catalysed reaction is 1-octadecanoyl-2-(5Z,8Z,11Z,14Z-eicosatetraenoyl)-sn-glycerol + ATP = 1-octadecanoyl-2-(5Z,8Z,11Z,14Z-eicosatetraenoyl)-sn-glycero-3-phosphate + ADP + H(+). It carries out the reaction 1-eicosanoyl-2-(5Z,8Z,11Z,14Z)-eicosatetraenoyl-sn-glycerol + ATP = 1-eicosanoyl-2-(5Z,8Z,11Z,14Z)-eicosatetraenoyl-sn-glycero-3-phosphate + ADP + H(+). It catalyses the reaction 1,2-di-(5Z,8Z,11Z,14Z)-eicosatetraenoyl-sn-glycerol + ATP = 1,2-di-(5Z,8Z,11Z,14Z)-eicosatetraenoyl-sn-glycero-3-phosphate + ADP + H(+). The enzyme catalyses 1-octadecanoyl-2-(9Z,12Z)-octadecadienoyl-sn-glycerol + ATP = 1-octadecanoyl-2-(9Z,12Z-octadecadienoyl)-sn-glycero-3-phosphate + ADP + H(+). The catalysed reaction is 1,2-di-(9Z,12Z-octadecadienoyl)-sn-glycerol + ATP = 1,2-di-(9Z,12Z-octadecadienoyl)-sn-glycero-3-phosphate + ADP + H(+). It carries out the reaction 1,2-di-(9Z-octadecenoyl)-sn-glycerol + ATP = 1,2-di-(9Z-octadecenoyl)-sn-glycero-3-phosphate + ADP + H(+). It participates in lipid metabolism; glycerolipid metabolism. With respect to regulation, undergoes competitive inhibition by its own product 1,2-diacyl-sn-glycero-3-phosphate/phosphatidic acid. The strongest inhibition being observed in vitro with 1-octadecanoyl-2-(5Z,8Z,11Z,14Z-eicosatetraenoyl)-sn-glycero-3-phosphate, a major intermediate in the phosphatidylinositol turnover cycle and more generally by diacylglycerols with an arachidonoyl acyl chain at the sn-2 position. Membrane-bound diacylglycerol kinase that converts diacylglycerol/DAG into phosphatidic acid/phosphatidate/PA and regulates the respective levels of these two bioactive lipids. Thereby, acts as a central switch between the signaling pathways activated by these second messengers with different cellular targets and opposite effects in numerous biological processes. Also plays an important role in the biosynthesis of complex lipids. Displays specificity for diacylglycerol substrates with an arachidonoyl acyl chain at the sn-2 position, with the highest activity toward 1-octadecanoyl-2-(5Z,8Z,11Z,14Z-eicosatetraenoyl)-sn-glycerol the main diacylglycerol intermediate within the phosphatidylinositol turnover cycle. Can also phosphorylate diacylglycerol substrates with a linoleoyl acyl chain at the sn-2 position but much less efficiently. The protein is Diacylglycerol kinase epsilon (DGKE) of Homo sapiens (Human).